A 293-amino-acid chain; its full sequence is Acetylglutamate kinase (293 aa).

Substrate contacts are provided by residues 67 to 68 (GG), Arg89, and Asn190.

Belongs to the acetylglutamate kinase family. ArgB subfamily.

The protein resides in the cytoplasm. The enzyme catalyses N-acetyl-L-glutamate + ATP = N-acetyl-L-glutamyl 5-phosphate + ADP. Its pathway is amino-acid biosynthesis; L-arginine biosynthesis; N(2)-acetyl-L-ornithine from L-glutamate: step 2/4. Its function is as follows. Catalyzes the ATP-dependent phosphorylation of N-acetyl-L-glutamate. This chain is Acetylglutamate kinase, found in Nitrosospira multiformis (strain ATCC 25196 / NCIMB 11849 / C 71).